The primary structure comprises 364 residues: Probable 7-methylxanthine methyltransferase 5 (364 aa).

S-adenosyl-L-homocysteine is bound at residue Tyr-19. Thr-26 provides a ligand contact to theobromine. S-adenosyl-L-homocysteine contacts are provided by Cys-64, Gln-69, Asp-101, Leu-102, Ser-134, and Phe-135. Theobromine is bound by residues Tyr-152, His-155, and Trp-156. 4 residues coordinate Mg(2+): Asn-172, Asp-258, Phe-260, and Asn-261. A theobromine-binding site is contributed by Phe-314.

This sequence belongs to the methyltransferase superfamily. Type-7 methyltransferase family. Mg(2+) is required as a cofactor.

The catalysed reaction is 7-methylxanthine + S-adenosyl-L-methionine = theobromine + S-adenosyl-L-homocysteine + H(+). It participates in alkaloid biosynthesis. Functionally, involved in the biosynthesis of theobromine. The chain is Probable 7-methylxanthine methyltransferase 5 from Theobroma cacao (Cacao).